Reading from the N-terminus, the 344-residue chain is GPALPP motifs-containing protein 1 (344 aa).

The disordered stretch occupies residues 1-309; that stretch reads MARDLIGPAL…QERIPFDRDK (309 aa). Residue Ala-2 is modified to N-acetylalanine. The short motif at 7 to 12 is the GPALPP motif 1 element; the sequence is GPALPP. Ser-28 is modified (phosphoserine). The GPALPP motif 2 signature appears at 30-35; it reads GPALPP. Composition is skewed to acidic residues over residues 58-67 and 80-93; these read GNQESEEDDT and DDND…DDDG. Positions 96–101 match the GPALPP motif 3 motif; sequence GPALPP. Ser-109 carries the phosphoserine modification. Pro residues predominate over residues 111 to 120; that stretch reads PRPIIGPALP. Positions 116–121 match the GPALPP motif 4 motif; sequence GPALPP. Residues 128–137 show a composition bias toward basic and acidic residues; that stretch reads QKSDKGRDDP. Position 142 is a phosphothreonine (Thr-142). A phosphoserine mark is found at Ser-144 and Ser-145. Basic and acidic residues-rich tracts occupy residues 167–191, 231–265, 273–283, and 291–309; these read EFEK…KPIV, PADR…KRLA, ESKRSESLMDI, and KAAE…DRDK. Residue Lys-275 forms a Glycyl lysine isopeptide (Lys-Gly) (interchain with G-Cter in SUMO2) linkage. Lys-312 participates in a covalent cross-link: Glycyl lysine isopeptide (Lys-Gly) (interchain with G-Cter in SUMO2).

The protein is GPALPP motifs-containing protein 1 (GPALPP1) of Pongo abelii (Sumatran orangutan).